Here is a 695-residue protein sequence, read N- to C-terminus: Glycine--tRNA ligase beta subunit (695 aa).

The protein belongs to the class-II aminoacyl-tRNA synthetase family. As to quaternary structure, tetramer of two alpha and two beta subunits.

It is found in the cytoplasm. It catalyses the reaction tRNA(Gly) + glycine + ATP = glycyl-tRNA(Gly) + AMP + diphosphate. The chain is Glycine--tRNA ligase beta subunit from Lawsonia intracellularis (strain PHE/MN1-00).